The sequence spans 333 residues: HTH-type transcriptional repressor PurR (333 aa).

The HTH lacI-type domain maps to 2–56 (ATIKDVAKLASVSTTTVSHVINKTRFVAEATQKRVWEAVEELNYAPSAVARSLKC). Residues 4–23 (IKDVAKLASVSTTTVSHVIN) constitute a DNA-binding region (H-T-H motif). The DNA-binding element occupies 48–56 (SAVARSLKC). Residues Phe-73, Lys-189, Thr-191, Phe-220, and Asp-274 each contribute to the hypoxanthine site.

As to quaternary structure, homodimer.

The protein operates within purine metabolism; purine nucleotide biosynthesis [regulation]. Functionally, is the main repressor of the genes involved in the de novo synthesis of purine nucleotides, regulating purB, purC, purEK, purF, purHD, purL, purMN and guaBA expression. PurR is allosterically activated to bind its cognate DNA by binding the purine corepressors, hypoxanthine or guanine, thereby effecting transcription repression. In Aliivibrio salmonicida (strain LFI1238) (Vibrio salmonicida (strain LFI1238)), this protein is HTH-type transcriptional repressor PurR.